Here is a 574-residue protein sequence, read N- to C-terminus: MSIQENISSLQLRSWVSKSQRDLAKSILIGAPGGPAGYLRRASVAQLTQELGTAFFQQQQLPAAMADTFLEHLCLLDIDSEPVAARSTSIIATIGPASRSVERLKEMIKAGMNIARLNFSHGSHEYHAESIANVREAVESFAGSPLSYRPVAIALDTKGPEIRTGILQGGPESEVELVKGSQVLVTVDPAFRTRGNANTVWVDYPNIVRVVPVGGRIYIDDGLISLVVQKIGPEGLVTQVENGGVLGSRKGVNLPGAQVDLPGLSEQDVRDLRFGVEHGVDIVFASFVRKASDVAAVRAALGPEGHGIKIISKIENHEGVKRFDEILEVSDGIMVARGDLGIEIPAEKVFLAQKMMIGRCNLAGKPVVCATQMLESMITKPRPTRAETSDVANAVLDGADCIMLSGETAKGNFPVEAVKMQHAIAREAEAAVYHRQLFEELRRAAPLSRDPTEVTAIGAVEAAFKCCAAAIIVLTTTGRSAQLLSRYRPRAAVIAVTRSAQAARQVHLCRGVFPLLYREPPEAIWADDVDRRVQFGIESGKLRGFLRVGDLVIVVTGWRPGSGYTNIMRVLSIS.

Residues S2, S19, S26, and S43 each carry the phosphoserine modification. Residue R116 coordinates substrate. Residues N118, S120, D156, and T157 each coordinate K(+). 118–121 (NFSH) provides a ligand contact to ATP. Positions 163 and 250 each coordinate ATP. S292 bears the Phosphoserine mark. Substrate is bound at residue K313. A Mn(2+)-binding site is contributed by E315. Substrate is bound by residues G338, D339, and T371. D339 provides a ligand contact to Mn(2+). Beta-D-fructose 1,6-bisphosphate-binding positions include 475–480 (TTTGRS), W525, R532, and 559–564 (RPGSGY).

This sequence belongs to the pyruvate kinase family. As to quaternary structure, homotetramer. The cofactor is Mg(2+). It depends on Mn(2+) as a cofactor. K(+) serves as cofactor.

The catalysed reaction is pyruvate + ATP = phosphoenolpyruvate + ADP + H(+). The protein operates within carbohydrate degradation; glycolysis; pyruvate from D-glyceraldehyde 3-phosphate: step 5/5. Allosterically activated by fructose 1,6-bisphosphate. In terms of biological role, pyruvate kinase that catalyzes the conversion of phosphoenolpyruvate to pyruvate with the synthesis of ATP, and which plays a key role in glycolysis. This chain is Pyruvate kinase PKLR (PKLR), found in Homo sapiens (Human).